A 293-amino-acid polypeptide reads, in one-letter code: RNA pseudouridylate synthase domain-containing protein 1 (293 aa).

The active site involves Asp67.

Belongs to the pseudouridine synthase RluA family.

The chain is RNA pseudouridylate synthase domain-containing protein 1 (rpusd1) from Danio rerio (Zebrafish).